The chain runs to 232 residues: Large ribosomal subunit protein uL1 (232 aa).

The protein belongs to the universal ribosomal protein uL1 family. As to quaternary structure, part of the 50S ribosomal subunit.

In terms of biological role, binds directly to 23S rRNA. The L1 stalk is quite mobile in the ribosome, and is involved in E site tRNA release. Functionally, protein L1 is also a translational repressor protein, it controls the translation of the L11 operon by binding to its mRNA. This chain is Large ribosomal subunit protein uL1, found in Bartonella bacilliformis (strain ATCC 35685 / KC583 / Herrer 020/F12,63).